The sequence spans 521 residues: Medium/long-chain-fatty-acid--[acyl-carrier-protein] ligase MbtM (521 aa).

It belongs to the ATP-dependent AMP-binding enzyme family.

The catalysed reaction is a long-chain fatty acid + holo-[ACP] + ATP = a long-chain fatty acyl-[ACP] + AMP + diphosphate. It catalyses the reaction a medium-chain fatty acid + holo-[ACP] + ATP = a medium-chain fatty acyl-[ACP] + AMP + diphosphate. The protein operates within siderophore biosynthesis; mycobactin biosynthesis. In terms of biological role, activates lipidic moieties required for mycobactin biosynthesis. Converts medium- to long-chain aliphatic fatty acids into acyl adenylate, which is further transferred on to the phosphopantetheine arm of the carrier protein MbtL. This is Medium/long-chain-fatty-acid--[acyl-carrier-protein] ligase MbtM (mbtM) from Mycobacterium sp. (strain MCS).